Here is a 319-residue protein sequence, read N- to C-terminus: MKTIAILTSGGDAPGMNACIRSIARTCIYNGIRVMGIRSGYDGLMNGNIYEMNVSSVADIIHRGGTILGSARCPEFKTEEGQKKGAQILKDFGIDGLVVLGGDGSFKGASALSKIGISTIGIPCTIDNDMGYTDYTIGFFTAVETVSDAISKLRDTSSSHGRANIIEVMGRNCGDIALYSGVASGAESILVPEVELNIDEVTEKIERGRKRGKLHHLIMLAEGVGGAYDIKNMIEEKTGVETKVTILGHVQRGGTPCTFDRLMATQMGNLAVKLIMEEKTDLAIAMKDNKIITVPIDEAVTTKRKFRDDLYEISKEISI.

Position 11 (Gly-11) interacts with ATP. 21–25 provides a ligand contact to ADP; that stretch reads RSIAR. Residues 72–73 and 102–105 contribute to the ATP site; these read RC and GDGS. Asp-103 lines the Mg(2+) pocket. 125-127 is a substrate binding site; that stretch reads TID. Asp-127 serves as the catalytic Proton acceptor. ADP is bound at residue Arg-154. Substrate contacts are provided by residues Arg-162 and 169 to 171; that span reads MGR. ADP contacts are provided by residues 185 to 187, Arg-211, and 213 to 215; these read GAE and KLH. Substrate contacts are provided by residues Glu-222, Lys-243, and 249 to 252; that span reads HVQR.

This sequence belongs to the phosphofructokinase type A (PFKA) family. ATP-dependent PFK group I subfamily. Prokaryotic clade 'B1' sub-subfamily. As to quaternary structure, homotetramer. Mg(2+) serves as cofactor.

The protein localises to the cytoplasm. It catalyses the reaction beta-D-fructose 6-phosphate + ATP = beta-D-fructose 1,6-bisphosphate + ADP + H(+). Its pathway is carbohydrate degradation; glycolysis; D-glyceraldehyde 3-phosphate and glycerone phosphate from D-glucose: step 3/4. Allosterically activated by ADP and other diphosphonucleosides, and allosterically inhibited by phosphoenolpyruvate. Functionally, catalyzes the phosphorylation of D-fructose 6-phosphate to fructose 1,6-bisphosphate by ATP, the first committing step of glycolysis. The chain is ATP-dependent 6-phosphofructokinase from Finegoldia magna (strain ATCC 29328 / DSM 20472 / WAL 2508) (Peptostreptococcus magnus).